We begin with the raw amino-acid sequence, 181 residues long: Major urinary protein 11 (181 aa).

A signal peptide spans 1-19; the sequence is MKMLLLLLCLGLTLVCVHA. Residues C83 and C176 are joined by a disulfide bond.

It belongs to the calycin superfamily. Lipocalin family.

Its subcellular location is the secreted. Its function is as follows. Major urinary proteins (Mups) bind pheromones, and thus stabilize them to allow slow release into the air from urine marks. May protect pheromones from oxidation. May also act as pheromones themselves. In this context, they play a role in the regulation of social behaviors, such as aggression, mating, pup-suckling, territory establishment and dominance. Binds the pheromone analog 2-sec-butyl-4,5-dihydrothiazole (SBT) in vitro. The chain is Major urinary protein 11 from Mus musculus (Mouse).